Reading from the N-terminus, the 233-residue chain is Small ribosomal subunit protein uS3 (233 aa).

The region spanning valine 39–arginine 107 is the KH type-2 domain. Residues valine 214–lysine 233 are disordered.

The protein belongs to the universal ribosomal protein uS3 family. In terms of assembly, part of the 30S ribosomal subunit. Forms a tight complex with proteins S10 and S14.

Functionally, binds the lower part of the 30S subunit head. Binds mRNA in the 70S ribosome, positioning it for translation. The polypeptide is Small ribosomal subunit protein uS3 (Pectobacterium atrosepticum (strain SCRI 1043 / ATCC BAA-672) (Erwinia carotovora subsp. atroseptica)).